The primary structure comprises 523 residues: Spastin (523 aa).

The Cytoplasmic segment spans residues 1 to 41 (MLDKLSKHKTMFYERVKEIDQILFSQQQAKQTQLDNLSNNN). The segment at residues 42 to 58 (ASGGFFSGFMKMFSPLS) is an intramembrane region (helical). Low complexity-rich tracts occupy residues 57-71 (LSTP…NSNT), 171-184 (QQPP…QQQP), and 193-210 (TALR…TANN). Disordered stretches follow at residues 57–77 (LSTP…AISQ) and 129–218 (GISS…LDQI). Residues 59-523 (TPPNSSSNNN…ESYGTFAKGI (465 aa)) are Cytoplasmic-facing.

The protein belongs to the AAA ATPase family. Spastin subfamily. Homohexamer. The homohexamer is stabilized by ATP-binding. The homohexamer may adopt a ring conformation through which microtubules pass prior to being severed.

The protein resides in the membrane. It catalyses the reaction n ATP + n H2O + a microtubule = n ADP + n phosphate + (n+1) alpha/beta tubulin heterodimers.. Its function is as follows. ATP-dependent microtubule severing protein. Stimulates microtubule minus-end depolymerization and poleward microtubule flux in the mitotic spindle. This Naegleria gruberi (Amoeba) protein is Spastin.